Consider the following 199-residue polypeptide: Ribosome maturation factor RimP (199 aa).

A disordered region spans residues Ala-165–Gln-199. The segment covering Pro-172–Gln-199 has biased composition (acidic residues).

It belongs to the RimP family.

It localises to the cytoplasm. Functionally, required for maturation of 30S ribosomal subunits. This is Ribosome maturation factor RimP from Hyphomonas neptunium (strain ATCC 15444).